The sequence spans 441 residues: Probable magnesium transporter NIPA8 (441 aa).

Over 1–4 the chain is Extracellular; sequence MGEW. Residues 5-25 traverse the membrane as a helical segment; it reads VIGAFINIFGSVAINFGTNLL. Residues 26-56 lie on the Cytoplasmic side of the membrane; the sequence is KLGHNERERLALQDGGGKMPLKPIIHNQTWR. Residues 57–77 form a helical membrane-spanning segment; that stretch reads VGILVFLLGNCLNFISFGYAA. The Extracellular portion of the chain corresponds to 78-79; it reads QS. A helical transmembrane segment spans residues 80 to 100; it reads LLAALGSIQFVSNIAFAYVVL. Residues 101 to 105 lie on the Cytoplasmic side of the membrane; that stretch reads NKMVT. The helical transmembrane segment at 106–126 threads the bilayer; it reads VKVLVATAFIVLGNVFLVAFG. The Extracellular segment spans residues 127-144; that stretch reads NHQSPVFTPEQLAEKYSN. The helical transmembrane segment at 145–165 threads the bilayer; the sequence is VTFLVYCGILILIVAVHHFLY. The Cytoplasmic segment spans residues 166-184; sequence RKGEVLISTPGQEISSYWK. A helical membrane pass occupies residues 185–205; sequence MLLPFSYAVVSGAIGSCSVLF. The Extracellular segment spans residues 206–222; the sequence is AKSLSNLLRLAMSSSYQ. The helical transmembrane segment at 223–243 threads the bilayer; that stretch reads LHSWFTYSMLLLFLSTAGFWM. The Cytoplasmic portion of the chain corresponds to 244 to 255; it reads TRLNEGLSLYDA. A helical transmembrane segment spans residues 256–276; that stretch reads ILIVPMFQIAWTFFSICTGCI. Residues 277–288 are Extracellular-facing; the sequence is YFQEFQVFDALR. Residues 289–309 traverse the membrane as a helical segment; sequence TTMFILGMMCVFIGISLLAPD. The Cytoplasmic portion of the chain corresponds to 310–441; that stretch reads DTRGNETKDN…MLEKTISSKA (132 aa). The disordered stretch occupies residues 313–347; that stretch reads GNETKDNSSSLDSIVSSSVPTEEDRLIPQSSEDGH. Over residues 320-330 the composition is skewed to low complexity; that stretch reads SSSLDSIVSSS. Residues 334 to 347 are compositionally biased toward basic and acidic residues; that stretch reads EEDRLIPQSSEDGH.

This sequence belongs to the NIPA (TC 2.A.7) family. As to quaternary structure, homodimer.

It localises to the cell membrane. Its subcellular location is the early endosome. Its function is as follows. Acts as a Mg(2+) transporter. Can also transport other divalent cations such as Fe(2+), Sr(2+), Ba(2+), Mn(2+) and Co(2+) but to a much less extent than Mg(2+). This chain is Probable magnesium transporter NIPA8, found in Arabidopsis thaliana (Mouse-ear cress).